The chain runs to 817 residues: DNA mismatch repair protein MutS (817 aa).

604 to 611 lines the ATP pocket; it reads GPNMSGKS.

This sequence belongs to the DNA mismatch repair MutS family.

Functionally, this protein is involved in the repair of mismatches in DNA. It is possible that it carries out the mismatch recognition step. This protein has a weak ATPase activity. This is DNA mismatch repair protein MutS from Petrotoga mobilis (strain DSM 10674 / SJ95).